Reading from the N-terminus, the 631-residue chain is Coiled-coil domain-containing protein 93 (631 aa).

Disordered regions lie at residues Met-1–Gln-23 and Gln-214–Asp-243. Residues Met-1–Asp-430 are sufficient for interaction with CCDC22. Basic and acidic residues predominate over residues Ser-215–Thr-225. 3 positions are modified to phosphoserine: Ser-298, Ser-301, and Ser-305. Residues Leu-309 to Ser-631 are a coiled coil. Residues Leu-421–Thr-433 are compositionally biased toward basic and acidic residues. The disordered stretch occupies residues Leu-421–Met-447. A sufficient for interaction with WASHC2C region spans residues Thr-448–Ser-631.

Belongs to the CCDC93 family. As to quaternary structure, component of the commander complex consisting of the CCC subcomplex and the retriever subcomplex. Component of the CCC (COMMD/CCDC22/CCDC93) subcomplex consisting of COMMD1, COMMD2, COMMD3, COMMD4, COMMD5, COMMD6, COMMD7, COMMD8, COMMD9, COMMD10, CCDC22 and CCDC93. Forms a coiled-coil heterodimer with CCDC22; this heterodimer interacts with the guanine nucleotide exchange factor DENND10; the interaction is direct. Interacts with WASHC1. Interacts directly with WASHC2C. Interacts with SNX17 and SNX31.

The protein resides in the early endosome. Its function is as follows. Component of the commander complex that is essential for endosomal recycling of transmembrane cargos; the commander complex is composed of composed of the CCC subcomplex and the retriever subcomplex. Component of the CCC complex, which is involved in the regulation of endosomal recycling of surface proteins, including integrins, signaling receptor and channels. The CCC complex associates with SNX17, retriever and WASH complexes to prevent lysosomal degradation and promote cell surface recycling of numerous cargos such as integrins ITGA5:ITGB1. Involved in copper-dependent ATP7A trafficking between the trans-Golgi network and vesicles in the cell periphery; the function is proposed to depend on its association within the CCC complex and cooperation with the WASH complex on early endosomes and is dependent on its interaction with WASHC2C. (Microbial infection) The CCC complex, in collaboration with the heterotrimeric retriever complex, mediates the exit of human papillomavirus to the cell surface. This Homo sapiens (Human) protein is Coiled-coil domain-containing protein 93 (CCDC93).